Here is a 152-residue protein sequence, read N- to C-terminus: Xanthine-guanine phosphoribosyltransferase (152 aa).

5-phospho-alpha-D-ribose 1-diphosphate-binding positions include 37–38 (RG) and 88–96 (DDLVDTGGT). Asp89 contributes to the Mg(2+) binding site. Residues Asp92 and Ile135 each contribute to the guanine site. Residues Asp92 and Ile135 each contribute to the xanthine site. Residues 92-96 (DTGGT) and 134-135 (WI) contribute to the GMP site.

This sequence belongs to the purine/pyrimidine phosphoribosyltransferase family. XGPT subfamily. As to quaternary structure, homotetramer. Requires Mg(2+) as cofactor.

It is found in the cell inner membrane. It catalyses the reaction GMP + diphosphate = guanine + 5-phospho-alpha-D-ribose 1-diphosphate. It carries out the reaction XMP + diphosphate = xanthine + 5-phospho-alpha-D-ribose 1-diphosphate. The catalysed reaction is IMP + diphosphate = hypoxanthine + 5-phospho-alpha-D-ribose 1-diphosphate. The protein operates within purine metabolism; GMP biosynthesis via salvage pathway; GMP from guanine: step 1/1. It functions in the pathway purine metabolism; XMP biosynthesis via salvage pathway; XMP from xanthine: step 1/1. Purine salvage pathway enzyme that catalyzes the transfer of the ribosyl-5-phosphate group from 5-phospho-alpha-D-ribose 1-diphosphate (PRPP) to the N9 position of the 6-oxopurines guanine and xanthine to form the corresponding ribonucleotides GMP (guanosine 5'-monophosphate) and XMP (xanthosine 5'-monophosphate), with the release of PPi. To a lesser extent, also acts on hypoxanthine. In Yersinia enterocolitica serotype O:8 / biotype 1B (strain NCTC 13174 / 8081), this protein is Xanthine-guanine phosphoribosyltransferase.